The sequence spans 460 residues: Bifunctional protein GlmU (460 aa).

Residues 1 to 235 (MALSAAIVLA…PLTVEGVNDR (235 aa)) form a pyrophosphorylase region. UDP-N-acetyl-alpha-D-glucosamine contacts are provided by residues 9-12 (LAAG), Lys23, Gln76, and 81-82 (GT). Asp109 contacts Mg(2+). UDP-N-acetyl-alpha-D-glucosamine contacts are provided by Gly146, Glu161, Asn176, and Asn233. A Mg(2+)-binding site is contributed by Asn233. The interval 236 to 256 (VQLAALSKTYNRRVCERWMRD) is linker. The segment at 257 to 460 (GVTILDPETT…VEGWKPAWER (204 aa)) is N-acetyltransferase. 2 residues coordinate UDP-N-acetyl-alpha-D-glucosamine: Arg338 and Lys356. The active-site Proton acceptor is His368. Residues Tyr371 and Asn382 each contribute to the UDP-N-acetyl-alpha-D-glucosamine site. Acetyl-CoA-binding positions include 391–392 (NY) and Ala428.

It in the N-terminal section; belongs to the N-acetylglucosamine-1-phosphate uridyltransferase family. In the C-terminal section; belongs to the transferase hexapeptide repeat family. Homotrimer. Mg(2+) is required as a cofactor.

It localises to the cytoplasm. The enzyme catalyses alpha-D-glucosamine 1-phosphate + acetyl-CoA = N-acetyl-alpha-D-glucosamine 1-phosphate + CoA + H(+). The catalysed reaction is N-acetyl-alpha-D-glucosamine 1-phosphate + UTP + H(+) = UDP-N-acetyl-alpha-D-glucosamine + diphosphate. Its pathway is nucleotide-sugar biosynthesis; UDP-N-acetyl-alpha-D-glucosamine biosynthesis; N-acetyl-alpha-D-glucosamine 1-phosphate from alpha-D-glucosamine 6-phosphate (route II): step 2/2. It participates in nucleotide-sugar biosynthesis; UDP-N-acetyl-alpha-D-glucosamine biosynthesis; UDP-N-acetyl-alpha-D-glucosamine from N-acetyl-alpha-D-glucosamine 1-phosphate: step 1/1. It functions in the pathway bacterial outer membrane biogenesis; LPS lipid A biosynthesis. In terms of biological role, catalyzes the last two sequential reactions in the de novo biosynthetic pathway for UDP-N-acetylglucosamine (UDP-GlcNAc). The C-terminal domain catalyzes the transfer of acetyl group from acetyl coenzyme A to glucosamine-1-phosphate (GlcN-1-P) to produce N-acetylglucosamine-1-phosphate (GlcNAc-1-P), which is converted into UDP-GlcNAc by the transfer of uridine 5-monophosphate (from uridine 5-triphosphate), a reaction catalyzed by the N-terminal domain. This is Bifunctional protein GlmU from Bifidobacterium longum (strain DJO10A).